The chain runs to 401 residues: Adaptive-response sensory kinase SasA (401 aa).

One can recognise a Histidine kinase domain in the interval 175 to 400; sequence MLVHDLRNPL…WFHFTLPVYP (226 aa). Histidine 178 carries the phosphohistidine; by autocatalysis modification.

Homooligomerizes. Interacts with KaiC. Participates in the KaiABC clock complex, whose core is composed of a KaiC homohexamer, 6 KaiB and up to 6 KaiA dimers. SasA and KaiB(fs) compete to bind to KaiC.

It carries out the reaction ATP + protein L-histidine = ADP + protein N-phospho-L-histidine.. Member of the two-component regulatory system SasA/RpaA involved in genome-wide circadian gene expression. One of several clock output pathways. Participates in the Kai clock protein complex, the main circadian regulator in cyanobacteria, via its interaction with KaiC. KaiC enhances the autophosphorylation activity of SasA, which then transfers its phosphate group to RpaA to activate it. In addition to its output function, recruits fold-shifted KaiB (KaiB(fs)) to KaiC to cooperatively form the KaiB(6):KaiC(6) complex (independent of SasA kinase activity). Required for robustness of the circadian rhythm of gene expression and is involved in clock output, also required for adaptation to light/dark cycles. This chain is Adaptive-response sensory kinase SasA, found in Nostoc sp. (strain PCC 7120 / SAG 25.82 / UTEX 2576).